A 341-amino-acid polypeptide reads, in one-letter code: DnaJ homolog subfamily C member 22 (341 aa).

Residues 4 to 50 (GLLMTYALWAFGGPVGLHHLYLGRDSHALLWMLTLGGGGLGWLWEFW) enclose the TM2 domain. The next 7 helical transmembrane spans lie at 5–25 (LLMT…HLYL), 30–50 (HALL…WEFW), 81–101 (FASQ…SLSS), 105–125 (FYIV…AAVG), 135–155 (LGAA…ILPI), 185–205 (VGLA…YNTA), and 232–252 (VESV…APGF). Positions 277–341 (LAHQVLGIPE…QPKKPRASWR (65 aa)) constitute a J domain.

Its subcellular location is the membrane. May function as a co-chaperone. The protein is DnaJ homolog subfamily C member 22 (Dnajc22) of Rattus norvegicus (Rat).